We begin with the raw amino-acid sequence, 152 residues long: Small ribosomal subunit protein bS6 (152 aa).

The disordered stretch occupies residues 96–152; that stretch reads HEEGPSAMLQKRDRDDRGERGDRGDRGDRGDRGFGGREDRPRRPRPTEESHGGEEEV.

It belongs to the bacterial ribosomal protein bS6 family.

Its function is as follows. Binds together with bS18 to 16S ribosomal RNA. The protein is Small ribosomal subunit protein bS6 of Xanthobacter autotrophicus (strain ATCC BAA-1158 / Py2).